Consider the following 310-residue polypeptide: Methionyl-tRNA formyltransferase (310 aa).

111-114 is a (6S)-5,6,7,8-tetrahydrofolate binding site; that stretch reads SILP.

The protein belongs to the Fmt family.

It carries out the reaction L-methionyl-tRNA(fMet) + (6R)-10-formyltetrahydrofolate = N-formyl-L-methionyl-tRNA(fMet) + (6S)-5,6,7,8-tetrahydrofolate + H(+). In terms of biological role, attaches a formyl group to the free amino group of methionyl-tRNA(fMet). The formyl group appears to play a dual role in the initiator identity of N-formylmethionyl-tRNA by promoting its recognition by IF2 and preventing the misappropriation of this tRNA by the elongation apparatus. The sequence is that of Methionyl-tRNA formyltransferase from Finegoldia magna (strain ATCC 29328 / DSM 20472 / WAL 2508) (Peptostreptococcus magnus).